We begin with the raw amino-acid sequence, 403 residues long: Aminomethyltransferase, mitochondrial (403 aa).

A mitochondrion-targeting transit peptide spans 1–28; sequence MQRAVSVVARLGFRLQAFPPALCRPLSC. Residues Glu232, Arg261, and Tyr399 each coordinate substrate.

The protein belongs to the GcvT family. The glycine cleavage system is composed of four proteins: P, T, L and H.

The protein resides in the mitochondrion. The catalysed reaction is N(6)-[(R)-S(8)-aminomethyldihydrolipoyl]-L-lysyl-[protein] + (6S)-5,6,7,8-tetrahydrofolate = N(6)-[(R)-dihydrolipoyl]-L-lysyl-[protein] + (6R)-5,10-methylene-5,6,7,8-tetrahydrofolate + NH4(+). Functionally, the glycine cleavage system catalyzes the degradation of glycine. The protein is Aminomethyltransferase, mitochondrial of Homo sapiens (Human).